Here is a 1401-residue protein sequence, read N- to C-terminus: DNA-directed RNA polymerase subunit beta' (1401 aa).

Residues C71, C73, C86, and C89 each coordinate Zn(2+). Mg(2+) contacts are provided by D462, D464, and D466. Positions 810, 884, 891, and 894 each coordinate Zn(2+). A disordered region spans residues 1378-1401 (EKQATIVPSAPEPEPLALPTPEQS).

This sequence belongs to the RNA polymerase beta' chain family. The RNAP catalytic core consists of 2 alpha, 1 beta, 1 beta' and 1 omega subunit. When a sigma factor is associated with the core the holoenzyme is formed, which can initiate transcription. Mg(2+) serves as cofactor. It depends on Zn(2+) as a cofactor.

It catalyses the reaction RNA(n) + a ribonucleoside 5'-triphosphate = RNA(n+1) + diphosphate. Functionally, DNA-dependent RNA polymerase catalyzes the transcription of DNA into RNA using the four ribonucleoside triphosphates as substrates. This is DNA-directed RNA polymerase subunit beta' from Rhodopseudomonas palustris (strain BisB18).